A 163-amino-acid polypeptide reads, in one-letter code: Ureidoglycolate lyase 2 (163 aa).

It belongs to the ureidoglycolate lyase family. Homodimer. Ni(2+) serves as cofactor.

The catalysed reaction is (S)-ureidoglycolate = urea + glyoxylate. It functions in the pathway nitrogen metabolism; (S)-allantoin degradation. Its function is as follows. Catalyzes the catabolism of the allantoin degradation intermediate (S)-ureidoglycolate, generating urea and glyoxylate. Involved in the utilization of allantoin as nitrogen source. The polypeptide is Ureidoglycolate lyase 2 (Rhizobium meliloti (strain 1021) (Ensifer meliloti)).